Reading from the N-terminus, the 444-residue chain is ATP-dependent protease ATPase subunit HslU (444 aa).

Residues Ile18, 60–65 (GVGKTE), Asp256, Glu322, and Arg394 each bind ATP.

This sequence belongs to the ClpX chaperone family. HslU subfamily. As to quaternary structure, a double ring-shaped homohexamer of HslV is capped on each side by a ring-shaped HslU homohexamer. The assembly of the HslU/HslV complex is dependent on binding of ATP.

It localises to the cytoplasm. Functionally, ATPase subunit of a proteasome-like degradation complex; this subunit has chaperone activity. The binding of ATP and its subsequent hydrolysis by HslU are essential for unfolding of protein substrates subsequently hydrolyzed by HslV. HslU recognizes the N-terminal part of its protein substrates and unfolds these before they are guided to HslV for hydrolysis. This Klebsiella pneumoniae subsp. pneumoniae (strain ATCC 700721 / MGH 78578) protein is ATP-dependent protease ATPase subunit HslU.